Consider the following 310-residue polypeptide: Olfactory receptor 5P52 (310 aa).

The Extracellular segment spans residues 1–25 (MEAENHTTVAELIILGLTEDPKLCI). Asn-5 carries N-linked (GlcNAc...) asparagine glycosylation. Residues 26–46 (VFFVIFLGVYIITLVGNISII) form a helical membrane-spanning segment. Over 47–54 (TLIRISSQ) the chain is Cytoplasmic. The helical transmembrane segment at 55–75 (LHTPMYLFLSHLAFVDIVFST) threads the bilayer. Residues 76 to 99 (SVSVIMLMELLGHGLVLSVATCAA) are Extracellular-facing. A disulfide bridge links Cys-97 with Cys-189. A helical transmembrane segment spans residues 100–120 (QLCMTVSFGSAECFLLAAMAY). Residues 121-133 (DRYVAICSPLLYS) are Cytoplasmic-facing. A helical membrane pass occupies residues 134–154 (TLMSSRVCFLLLGISYVGGFV). Topologically, residues 155 to 196 (NGWTFTGCVLSLSFCGPTQINHFFCDFSPLLKVSCSDVSIIG) are extracellular. Residues 197-217 (IIPSISSGSIIVVTVFVIAVS) traverse the membrane as a helical segment. The Cytoplasmic segment spans residues 218–237 (YIYILITILKMRSTEGRHKA). The helical transmembrane segment at 238–258 (FSTCTSHLTAVTLFYGTITVI) threads the bilayer. Topologically, residues 259–271 (YVMPKSSYSTEQN) are extracellular. Residues 272–292 (KVISLFYTVVIPMLNPLIYSL) traverse the membrane as a helical segment. Topologically, residues 293–310 (RNRDVKDALRKAIVRVYS) are cytoplasmic.

It belongs to the G-protein coupled receptor 1 family.

Its subcellular location is the cell membrane. Its function is as follows. Potential odorant receptor. This Mus musculus (Mouse) protein is Olfactory receptor 5P52.